We begin with the raw amino-acid sequence, 511 residues long: MTYLLALDQGTSSSRSIVFDEHGRIVAQAQLELPQIYPRPGWVEHDPLEIWRSQLATARAALAKAGIAANAVRAVGIANQRETTVLWNRKTGQPVHHAIVWQDRRAEPACAQLREQGHAGAIQAKTGLLIDAYFSGSKLQWLLDHVPGAREAAERGELAFGTVDSWLIWKLTHGQRHLTDVSNAARTMLLNVHTNQWDDDLLALLRIPRALMPEVLPSSADFGDTAADLLGHGIRIGGVAGDQQSALFGQACFTAGMAKNTYGTGCFMLMHLGARFQTSDNGLLTTSAAQLAPKPGAGSGQAEPALAQRAYAMEGSVFIGGAVVQWLRDGLRAITSSAGIEALAHSVPDAGGVMMVPAFTGLGAPYWKPEARGSITGLTRGSTLAHIARAALESIAYQSAALLQAMGRDAVAAGGAPVSELRVDGGACINDLLMQFQADLLGIPVLRPAVIETTALGAAYLAGLSSDLYHSTDELAQLWRAERRFEPRLDRARAQELMAHWEHAVRQATAR.

Thr-11 serves as a coordination point for ADP. ATP is bound by residues Thr-11, Ser-12, and Ser-13. Thr-11 contributes to the sn-glycerol 3-phosphate binding site. Residue Arg-15 participates in ADP binding. Arg-81, Glu-82, Tyr-133, and Asp-242 together coordinate sn-glycerol 3-phosphate. Glycerol contacts are provided by Arg-81, Glu-82, Tyr-133, Asp-242, and Gln-243. ADP is bound by residues Thr-264 and Gly-321. Residues Thr-264, Gly-321, Gln-325, and Gly-426 each coordinate ATP. 2 residues coordinate ADP: Gly-426 and Asn-430.

Belongs to the FGGY kinase family.

The enzyme catalyses glycerol + ATP = sn-glycerol 3-phosphate + ADP + H(+). It participates in polyol metabolism; glycerol degradation via glycerol kinase pathway; sn-glycerol 3-phosphate from glycerol: step 1/1. Its activity is regulated as follows. Inhibited by fructose 1,6-bisphosphate (FBP). Key enzyme in the regulation of glycerol uptake and metabolism. Catalyzes the phosphorylation of glycerol to yield sn-glycerol 3-phosphate. This chain is Glycerol kinase, found in Verminephrobacter eiseniae (strain EF01-2).